The following is a 58-amino-acid chain: Small ribosomal subunit protein bS21 (58 aa).

Residues 39–58 form a disordered region; the sequence is EKPSVKRKRKSEVARKRKKF. Over residues 43 to 58 the composition is skewed to basic residues; the sequence is VKRKRKSEVARKRKKF.

It belongs to the bacterial ribosomal protein bS21 family.

The sequence is that of Small ribosomal subunit protein bS21 from Streptococcus pneumoniae (strain ATCC BAA-255 / R6).